Here is a 671-residue protein sequence, read N- to C-terminus: Zinc finger protein 568 (671 aa).

The interval 1-31 (MERLSQMAGRRAWCAEDSVPRQEEEDRTRPS) is disordered. Residues 18–29 (SVPRQEEEDRTR) are compositionally biased toward basic and acidic residues. 2 consecutive KRAB domains span residues 34-105 (VTFK…RRSP) and 124-195 (LRFE…IWHP). The tract at residues 214 to 366 (EKMAKKHTCP…QGSERPHKCK (153 aa)) is disordered. 3 stretches are compositionally biased toward basic and acidic residues: residues 226–251 (EDSKTRGDREVTRELEGQQVHQEGHL), 296–312 (IEREQLHSKAKASEHAQ), and 329–341 (RPQESRKDSERKK). 11 C2H2-type zinc fingers span residues 363–385 (HKCKECGKAFHTPSQLSHHQKLH), 391–413 (YKCQECGKAFPSNAQLSLHHRVH), 419–441 (FECKECGKAFMRPSHLLRHQRIH), 447–469 (HKCKECGKAFRYDTQLSLHLLTH), 475–497 (FECKDCDKVYSCASQLALHQMSH), 503–525 (HKCKECGKGFISDSHLLRHQSVH), 531–553 (YKCKECGKGFRRGSELARHQRAH), 559–581 (YKCKECGKSFTCTTELFRHQKVH), 587–609 (HKCKECGKAFIRRSELTHHERSH), 615–637 (YECKECGKTFGRGSELSRHQKIH), and 643–665 (YKCQQCGKAFIRGSHLTQHQRIH).

The protein belongs to the krueppel C2H2-type zinc-finger protein family. Interacts with TRIM28. As to expression, little or no expression detected in most adult tissues (brain, liver, kidney, spleen, testis, ovary). In the hippocampus, detected in neural stem cells within the subventricular zone and subgranular zone.

The protein resides in the nucleus. Its function is as follows. Has transcriptional repression activity, partially through the recruitment of the corepressor TRIM28 but also has repression activity independently of this interaction. Essential during embryonic development, where it acts as direct repressor of IGF2-P0, placental-specific transcript of IGF2, in early development and regulates convergent extension movements required for axis elongation and tissue morphogenesis in all germ layers. Also important for normal morphogenesis of extraembryonic tissues including the yolk sac, extraembryonic mesoderm and placenta. May enhance proliferation or maintenance of neural stem cells. This Mus musculus (Mouse) protein is Zinc finger protein 568.